Reading from the N-terminus, the 239-residue chain is N-glycosylase/DNA lyase (239 aa).

Positions 24, 51, and 62 each coordinate 8-oxoguanine. The tract at residues 118–182 (ERYYEDMTLL…EDVRIIKLTR (65 aa)) is helix-hairpin-helix. Lys-142 serves as the catalytic Schiff-base intermediate with DNA. Phe-146 and Pro-172 together coordinate 8-oxoguanine. Residue Asp-174 is part of the active site. 8-oxoguanine is bound by residues Asp-208 and Trp-212.

The protein belongs to the archaeal N-glycosylase/DNA lyase (AGOG) family.

It carries out the reaction 2'-deoxyribonucleotide-(2'-deoxyribose 5'-phosphate)-2'-deoxyribonucleotide-DNA = a 3'-end 2'-deoxyribonucleotide-(2,3-dehydro-2,3-deoxyribose 5'-phosphate)-DNA + a 5'-end 5'-phospho-2'-deoxyribonucleoside-DNA + H(+). DNA repair enzyme that is part of the base excision repair (BER) pathway; protects from oxidative damage by removing the major product of DNA oxidation, 8-oxoguanine (GO), from single- and double-stranded DNA substrates. This is N-glycosylase/DNA lyase from Pyrococcus horikoshii (strain ATCC 700860 / DSM 12428 / JCM 9974 / NBRC 100139 / OT-3).